The sequence spans 378 residues: Alanine racemase (378 aa).

The Proton acceptor; specific for D-alanine role is filled by K40. K40 is subject to N6-(pyridoxal phosphate)lysine. R140 serves as a coordination point for substrate. Y270 (proton acceptor; specific for L-alanine) is an active-site residue. M317 contacts substrate.

Belongs to the alanine racemase family. Pyridoxal 5'-phosphate serves as cofactor.

It catalyses the reaction L-alanine = D-alanine. It participates in amino-acid biosynthesis; D-alanine biosynthesis; D-alanine from L-alanine: step 1/1. In terms of biological role, catalyzes the interconversion of L-alanine and D-alanine. May also act on other amino acids. In Lacticaseibacillus paracasei (strain ATCC 334 / BCRC 17002 / CCUG 31169 / CIP 107868 / KCTC 3260 / NRRL B-441) (Lactobacillus paracasei), this protein is Alanine racemase (alr).